Consider the following 95-residue polypeptide: Small ribosomal subunit protein bS6 (95 aa).

This sequence belongs to the bacterial ribosomal protein bS6 family.

Its function is as follows. Binds together with bS18 to 16S ribosomal RNA. This is Small ribosomal subunit protein bS6 from Acholeplasma laidlawii (strain PG-8A).